Reading from the N-terminus, the 200-residue chain is dITP/XTP pyrophosphatase (200 aa).

A substrate-binding site is contributed by 8–13 (SQNSSK). Mg(2+) is bound by residues glutamate 40 and aspartate 69. The active-site Proton acceptor is the aspartate 69. Residues serine 70, 154–157 (FGYD), lysine 177, and 182–183 (HR) contribute to the substrate site.

The protein belongs to the HAM1 NTPase family. Homodimer. Requires Mg(2+) as cofactor.

It catalyses the reaction XTP + H2O = XMP + diphosphate + H(+). The catalysed reaction is dITP + H2O = dIMP + diphosphate + H(+). It carries out the reaction ITP + H2O = IMP + diphosphate + H(+). Pyrophosphatase that catalyzes the hydrolysis of nucleoside triphosphates to their monophosphate derivatives, with a high preference for the non-canonical purine nucleotides XTP (xanthosine triphosphate), dITP (deoxyinosine triphosphate) and ITP. Seems to function as a house-cleaning enzyme that removes non-canonical purine nucleotides from the nucleotide pool, thus preventing their incorporation into DNA/RNA and avoiding chromosomal lesions. In Coxiella burnetii (strain RSA 493 / Nine Mile phase I), this protein is dITP/XTP pyrophosphatase.